The following is a 639-amino-acid chain: Bone morphogenetic protein 1 homolog (639 aa).

The N-terminal stretch at M1 to G23 is a signal peptide. Residues E24 to R109 constitute a propeptide that is removed on maturation. The region spanning R100–P305 is the Peptidase M12A domain. Residues N122 and N140 are each glycosylated (N-linked (GlcNAc...) asparagine). 6 disulfides stabilise this stretch: C143-C304, C167-C189, C169-C170, C307-C333, C360-C382, and C420-C446. H197 provides a ligand contact to Zn(2+). E198 is a catalytic residue. Residues H201 and H207 each contribute to the Zn(2+) site. 2 CUB domains span residues C307–I419 and C420–K531. N-linked (GlcNAc...) asparagine glycosylation occurs at N317. N455 carries N-linked (GlcNAc...) asparagine glycosylation. Cystine bridges form between C473-C495, C536-C548, C544-C557, and C559-C572. The EGF-like; calcium-binding domain occupies E532–E573.

Zn(2+) is required as a cofactor. Ectodermal and primary mesenchyme cells in hatched blastula.

The protein is Bone morphogenetic protein 1 homolog of Strongylocentrotus purpuratus (Purple sea urchin).